A 291-amino-acid chain; its full sequence is 4-hydroxy-tetrahydrodipicolinate synthase (291 aa).

Residue T44 coordinates pyruvate. The Proton donor/acceptor role is filled by Y132. The active-site Schiff-base intermediate with substrate is K160. V202 serves as a coordination point for pyruvate.

It belongs to the DapA family. As to quaternary structure, homotetramer; dimer of dimers.

It localises to the cytoplasm. The enzyme catalyses L-aspartate 4-semialdehyde + pyruvate = (2S,4S)-4-hydroxy-2,3,4,5-tetrahydrodipicolinate + H2O + H(+). It functions in the pathway amino-acid biosynthesis; L-lysine biosynthesis via DAP pathway; (S)-tetrahydrodipicolinate from L-aspartate: step 3/4. Its function is as follows. Catalyzes the condensation of (S)-aspartate-beta-semialdehyde [(S)-ASA] and pyruvate to 4-hydroxy-tetrahydrodipicolinate (HTPA). The polypeptide is 4-hydroxy-tetrahydrodipicolinate synthase (Clostridium perfringens (strain ATCC 13124 / DSM 756 / JCM 1290 / NCIMB 6125 / NCTC 8237 / Type A)).